The following is a 149-amino-acid chain: Putative pre-16S rRNA nuclease (149 aa).

This sequence belongs to the YqgF nuclease family.

Its subcellular location is the cytoplasm. Could be a nuclease involved in processing of the 5'-end of pre-16S rRNA. The chain is Putative pre-16S rRNA nuclease from Burkholderia vietnamiensis (strain G4 / LMG 22486) (Burkholderia cepacia (strain R1808)).